Consider the following 234-residue polypeptide: MRQSKEERVHRVFENISAHYDRMNSVISFRRHLKWRKDVMRRMNVQKGKKALDVCCGTADWTIALAEAVGPEGKVYGLDFSENMLKVGEQKVKARGLHNVKLIHGNAMQLPFPDNSFDYVTIGFGLRNVPDYMTVLKEMHRVTKPGGITVCLETSQPTLFGFRQLYYFYFRFIMPLFGKLLAKSYEEYSWLQESAREFPGRDELAEMFRAAGFVDVEVKPYTFGVAAMHLGYKR.

Residues threonine 58, aspartate 79, and 106-107 contribute to the S-adenosyl-L-methionine site; that span reads NA.

It belongs to the class I-like SAM-binding methyltransferase superfamily. MenG/UbiE family.

It carries out the reaction a 2-demethylmenaquinol + S-adenosyl-L-methionine = a menaquinol + S-adenosyl-L-homocysteine + H(+). It functions in the pathway quinol/quinone metabolism; menaquinone biosynthesis; menaquinol from 1,4-dihydroxy-2-naphthoate: step 2/2. In terms of biological role, methyltransferase required for the conversion of demethylmenaquinol (DMKH2) to menaquinol (MKH2). This chain is Demethylmenaquinone methyltransferase, found in Geobacillus stearothermophilus (Bacillus stearothermophilus).